Consider the following 506-residue polypeptide: Hippocampus abundant transcript-like protein 1 (506 aa).

The interval 1-25 (MSVEPPPELEEKAASEPEAGAMPEK) is disordered. Over 1–49 (MSVEPPPELEEKAASEPEAGAMPEKRAGAQAAGSTWLQGFGRPSVYHAA) the chain is Extracellular. Residues 50-70 (IVIFLEFFAWGLLTTPMLTVL) form a helical membrane-spanning segment. Residues 71–82 (HETFSQHTFLMN) are Cytoplasmic-facing. A helical membrane pass occupies residues 83-103 (GLIQGVKGLLSFLSAPLIGAL). Residues 104–111 (SDVWGRKP) lie on the Extracellular side of the membrane. Residues 112-132 (FLLGTVFFTCFPIPLMRISPW) traverse the membrane as a helical segment. The Cytoplasmic segment spans residues 133-134 (WY). The helical transmembrane segment at 135 to 155 (FAMISVSGVFSVTFSVIFAYV) threads the bilayer. At 156 to 168 (ADVTQEHERSTAY) the chain is on the extracellular side. The chain crosses the membrane as a helical span at residues 169-189 (GWVSATFAASLVSSPAIGAYL). Residues 190–196 (SASYGDS) are Cytoplasmic-facing. Residues 197–217 (LVVLVATVVALLDICFILVAV) form a helical membrane-spanning segment. At 218 to 255 (PESLPEKMRPVSWGAQISWKQADPFASLKKVGKDSTVL) the chain is on the extracellular side. A helical membrane pass occupies residues 256 to 276 (LICITVFLSYLPEAGQYSSFF). Topologically, residues 277–281 (LYLRQ) are cytoplasmic. A helical membrane pass occupies residues 282 to 302 (VIGFGSVKIAAFIAMVGILSI). Over 303–319 (VAQTAFLSILMRSLGNK) the chain is Extracellular. The chain crosses the membrane as a helical span at residues 320 to 340 (NTVLLGLGFQMLQLAWYGFGS). Gln-341 is a topological domain (cytoplasmic). The helical transmembrane segment at 342-362 (AWMMWAAGTVAAMSSITFPAI) threads the bilayer. The Extracellular portion of the chain corresponds to 363-387 (SALVSRNAESDQQGVAQGIITGIRG). The helical transmembrane segment at 388–408 (LCNGLGPALYGFIFYMFHVEL) threads the bilayer. At 409 to 428 (TELGPKLNSNNVPLQGAVIP) the chain is on the cytoplasmic side. A helical transmembrane segment spans residues 429–449 (GPPFLFGACIVLMSFLVALFI). The Extracellular portion of the chain corresponds to 450–506 (PEYSKASGVQKHSNSSSGSLTNTPERGSDEDIEPLLQDSSIWELSSFEEPGNQCTEL). The disordered stretch occupies residues 457–481 (GVQKHSNSSSGSLTNTPERGSDEDI). Over residues 459-474 (QKHSNSSSGSLTNTPE) the composition is skewed to polar residues. Asn-463 carries an N-linked (GlcNAc...) asparagine glycan.

The protein belongs to the major facilitator superfamily.

It is found in the membrane. The sequence is that of Hippocampus abundant transcript-like protein 1 from Homo sapiens (Human).